The primary structure comprises 331 residues: Aspartate carbamoyltransferase catalytic subunit (331 aa).

Positions 62 and 63 each coordinate carbamoyl phosphate. Position 90 (K90) interacts with L-aspartate. Carbamoyl phosphate contacts are provided by R112, H145, and Q148. L-aspartate contacts are provided by R185 and R246. Carbamoyl phosphate is bound by residues G287 and P288.

This sequence belongs to the aspartate/ornithine carbamoyltransferase superfamily. ATCase family. As to quaternary structure, heterododecamer (2C3:3R2) of six catalytic PyrB chains organized as two trimers (C3), and six regulatory PyrI chains organized as three dimers (R2).

It carries out the reaction carbamoyl phosphate + L-aspartate = N-carbamoyl-L-aspartate + phosphate + H(+). It functions in the pathway pyrimidine metabolism; UMP biosynthesis via de novo pathway; (S)-dihydroorotate from bicarbonate: step 2/3. Functionally, catalyzes the condensation of carbamoyl phosphate and aspartate to form carbamoyl aspartate and inorganic phosphate, the committed step in the de novo pyrimidine nucleotide biosynthesis pathway. This is Aspartate carbamoyltransferase catalytic subunit from Synechocystis sp. (strain ATCC 27184 / PCC 6803 / Kazusa).